The chain runs to 495 residues: Glutamyl-tRNA(Gln) amidotransferase subunit A (495 aa).

Active-site charge relay system residues include Lys75 and Ser150. Residue Ser174 is the Acyl-ester intermediate of the active site.

The protein belongs to the amidase family. GatA subfamily. As to quaternary structure, heterotrimer of A, B and C subunits.

It catalyses the reaction L-glutamyl-tRNA(Gln) + L-glutamine + ATP + H2O = L-glutaminyl-tRNA(Gln) + L-glutamate + ADP + phosphate + H(+). Functionally, allows the formation of correctly charged Gln-tRNA(Gln) through the transamidation of misacylated Glu-tRNA(Gln) in organisms which lack glutaminyl-tRNA synthetase. The reaction takes place in the presence of glutamine and ATP through an activated gamma-phospho-Glu-tRNA(Gln). The polypeptide is Glutamyl-tRNA(Gln) amidotransferase subunit A (Ralstonia nicotianae (strain ATCC BAA-1114 / GMI1000) (Ralstonia solanacearum)).